Consider the following 664-residue polypeptide: Macrolide export ATP-binding/permease protein MacB (664 aa).

The region spanning 8-245 is the ABC transporter domain; sequence LELVDVHRTY…AGPSVPLTLD (238 aa). Residue 44 to 51 participates in ATP binding; sequence GSSGSGKS. 4 helical membrane-spanning segments follow: residues 283 to 303, 543 to 563, 602 to 622, and 627 to 647; these read LLSVLGILVGVASVIAMMALG, GAIAAISLLVGGIGIMNIMLV, IIGIIAGIGISALLAVFAGWA, and IVSIVLATFFSAITGIFFGLW.

It belongs to the ABC transporter superfamily. Macrolide exporter (TC 3.A.1.122) family. As to quaternary structure, homodimer.

The protein localises to the cell inner membrane. In terms of biological role, non-canonical ABC transporter that contains transmembrane domains (TMD), which form a pore in the inner membrane, and an ATP-binding domain (NBD), which is responsible for energy generation. Confers resistance against macrolides. This Chlorobium luteolum (strain DSM 273 / BCRC 81028 / 2530) (Pelodictyon luteolum) protein is Macrolide export ATP-binding/permease protein MacB.